The following is a 291-amino-acid chain: Proteasome subunit beta (291 aa).

The propeptide at 1-57 (MTWPLPDRLSINSLSGTPAVDLSSFTDFLRRQAPELLPASISGGAPLAGGDAQLPHG) is removed in mature form; by autocatalysis. Threonine 58 functions as the Nucleophile in the catalytic mechanism.

It belongs to the peptidase T1B family. In terms of assembly, the 20S proteasome core is composed of 14 alpha and 14 beta subunits that assemble into four stacked heptameric rings, resulting in a barrel-shaped structure. The two inner rings, each composed of seven catalytic beta subunits, are sandwiched by two outer rings, each composed of seven alpha subunits. The catalytic chamber with the active sites is on the inside of the barrel. Has a gated structure, the ends of the cylinder being occluded by the N-termini of the alpha-subunits. Is capped by the proteasome-associated ATPase, ARC.

It is found in the cytoplasm. The enzyme catalyses Cleavage of peptide bonds with very broad specificity.. It participates in protein degradation; proteasomal Pup-dependent pathway. With respect to regulation, the formation of the proteasomal ATPase ARC-20S proteasome complex, likely via the docking of the C-termini of ARC into the intersubunit pockets in the alpha-rings, may trigger opening of the gate for substrate entry. Interconversion between the open-gate and close-gate conformations leads to a dynamic regulation of the 20S proteasome proteolysis activity. Functionally, component of the proteasome core, a large protease complex with broad specificity involved in protein degradation. This is Proteasome subunit beta from Mycobacterium tuberculosis (strain ATCC 25177 / H37Ra).